Consider the following 204-residue polypeptide: Protein XpaC (204 aa).

Its function is as follows. In double copy it causes aberrant cell morphology, filamentation and inhibits sporulation. Hydrolyzes 5-bromo-4-chloroindolyl phosphate. The protein is Protein XpaC (xpaC) of Bacillus subtilis (strain 168).